The following is a 160-amino-acid chain: Protein-export protein SecB (160 aa).

It belongs to the SecB family. As to quaternary structure, homotetramer, a dimer of dimers. One homotetramer interacts with 1 SecA dimer.

It is found in the cytoplasm. One of the proteins required for the normal export of preproteins out of the cell cytoplasm. It is a molecular chaperone that binds to a subset of precursor proteins, maintaining them in a translocation-competent state. It also specifically binds to its receptor SecA. The protein is Protein-export protein SecB of Agrobacterium fabrum (strain C58 / ATCC 33970) (Agrobacterium tumefaciens (strain C58)).